We begin with the raw amino-acid sequence, 188 residues long: Ribosome maturation factor RimM (188 aa).

Residues 93-175 (QDEFYFTDLI…EIEVQGDLSD (83 aa)) form the PRC barrel domain.

The protein belongs to the RimM family. Binds ribosomal protein uS19.

Its subcellular location is the cytoplasm. Its function is as follows. An accessory protein needed during the final step in the assembly of 30S ribosomal subunit, possibly for assembly of the head region. Essential for efficient processing of 16S rRNA. May be needed both before and after RbfA during the maturation of 16S rRNA. It has affinity for free ribosomal 30S subunits but not for 70S ribosomes. The protein is Ribosome maturation factor RimM of Gluconacetobacter diazotrophicus (strain ATCC 49037 / DSM 5601 / CCUG 37298 / CIP 103539 / LMG 7603 / PAl5).